We begin with the raw amino-acid sequence, 645 residues long: Translation factor GUF1 homolog, mitochondrial (645 aa).

Residues 40-215 (DKIRNFGIVA…AIIDRVPAPT (176 aa)) enclose the tr-type G domain. Residues 49–56 (AHVDHGKS), 108–112 (DTPGH), and 162–165 (NKID) contribute to the GTP site.

Belongs to the TRAFAC class translation factor GTPase superfamily. Classic translation factor GTPase family. LepA subfamily.

The protein resides in the mitochondrion inner membrane. The enzyme catalyses GTP + H2O = GDP + phosphate + H(+). Its function is as follows. Promotes mitochondrial protein synthesis. May act as a fidelity factor of the translation reaction, by catalyzing a one-codon backward translocation of tRNAs on improperly translocated ribosomes. Binds to mitochondrial ribosomes in a GTP-dependent manner. The sequence is that of Translation factor GUF1 homolog, mitochondrial from Caenorhabditis elegans.